We begin with the raw amino-acid sequence, 149 residues long: Large ribosomal subunit protein uL13 (149 aa).

It belongs to the universal ribosomal protein uL13 family. In terms of assembly, part of the 50S ribosomal subunit.

Functionally, this protein is one of the early assembly proteins of the 50S ribosomal subunit, although it is not seen to bind rRNA by itself. It is important during the early stages of 50S assembly. In Thermobifida fusca (strain YX), this protein is Large ribosomal subunit protein uL13.